The chain runs to 260 residues: G patch domain-containing protein 11 (260 aa).

The stretch at 25–61 (MLRQIREARRKEEKRQEANLKNRQKSIKEEEQERRDM) forms a coiled coil. The interval 33–60 (RRKEEKRQEANLKNRQKSIKEEEQERRD) is disordered. The G-patch domain maps to 69-115 (CENKGFALLQKMGYKSGQALGKSGDGIVEPIPLNVKTGKSGIGHETL). The residue at position 123 (Lys-123) is an N6-acetyllysine. Residues 187-212 (WLRPEEETEEETEEEKEQDEDEYKSE) are disordered. Over residues 192–210 (EETEEETEEEKEQDEDEYK) the composition is skewed to acidic residues.

It belongs to the GPATCH11 family.

Its subcellular location is the chromosome. The protein localises to the centromere. It is found in the kinetochore. The protein is G patch domain-containing protein 11 (GPATCH11) of Bos taurus (Bovine).